The following is a 266-amino-acid chain: Interleukin-1 beta (266 aa).

The propeptide occupies 1–114 (MAAVPELTSE…KTDADNFMSD (114 aa)).

This sequence belongs to the IL-1 family. Monomer. In its precursor form, weakly interacts with full-length MEFV; the mature cytokine does not interact at all. Interacts with integrins ITGAV:ITGBV and ITGA5:ITGB1; integrin-binding is required for IL1B signaling. Interacts with cargo receptor TMED10; the interaction is direct and is required for the secretion of IL1B mature form. Interacts with HSP90AB1; the interaction facilitates cargo translocation into the ERGIC. Interacts with HSP90B1; the interaction facilitates cargo translocation into the ERGIC.

The protein resides in the cytoplasm. The protein localises to the cytosol. It is found in the secreted. It localises to the lysosome. Its subcellular location is the extracellular exosome. In terms of biological role, potent pro-inflammatory cytokine. Initially discovered as the major endogenous pyrogen, induces prostaglandin synthesis, neutrophil influx and activation, T-cell activation and cytokine production, B-cell activation and antibody production, and fibroblast proliferation and collagen production. Promotes Th17 differentiation of T-cells. Synergizes with IL12/interleukin-12 to induce IFNG synthesis from T-helper 1 (Th1) cells. Plays a role in angiogenesis by inducing VEGF production synergistically with TNF and IL6. Involved in transduction of inflammation downstream of pyroptosis: its mature form is specifically released in the extracellular milieu by passing through the gasdermin-D (GSDMD) pore. This is Interleukin-1 beta (IL1B) from Canis lupus familiaris (Dog).